The following is a 913-amino-acid chain: Tyrosine-protein phosphatase non-receptor type 3 (913 aa).

Positions 29 to 312 constitute an FERM domain; it reads VICSIRFLDG…EHHSFFQAKK (284 aa). S357, S359, and S367 each carry phosphoserine. Disordered regions lie at residues 364 to 400 and 417 to 473; these read ETKSLPSRSPPITPNWRSPRLRHEIRKPRHSSADNLA and KGPL…PDGV. T376 bears the Phosphothreonine mark. S381 is modified (phosphoserine). Basic residues predominate over residues 382–393; sequence PRLRHEIRKPRH. Phosphoserine is present on S425. The span at 441–453 shows a compositional bias: polar residues; the sequence is SENNPAQSCLTQK. Over residues 454-470 the composition is skewed to low complexity; that stretch reads SSSSVSPSSNAPGSCSP. One can recognise a PDZ domain in the interval 510–582; it reads LIRITPDEEG…DQVVMFIKAS (73 aa). Residues 646-901 enclose the Tyrosine-protein phosphatase domain; that stretch reads VLIQFEQLYR…KFVCEAILRV (256 aa). Residues D811, 842–848, and Q886 each bind substrate; that span reads CSAGIGR. The Phosphocysteine intermediate role is filled by C842.

The protein belongs to the protein-tyrosine phosphatase family. Non-receptor class subfamily.

It is found in the cell membrane. The protein localises to the cytoplasm. The protein resides in the cytoskeleton. The enzyme catalyses O-phospho-L-tyrosyl-[protein] + H2O = L-tyrosyl-[protein] + phosphate. May act at junctions between the membrane and the cytoskeleton. This chain is Tyrosine-protein phosphatase non-receptor type 3 (Ptpn3), found in Mus musculus (Mouse).